The primary structure comprises 677 residues: Sulfate transporter 2.2 (677 aa).

At 1–110 (MQLSSLSHTS…QYKLNLFKKD (110 aa)) the chain is on the cytoplasmic side. Residues 111–131 (LMAGLTLASLCIPQSIGYANL) traverse the membrane as a helical segment. Residues 132-133 (AG) are Extracellular-facing. Residues 134–154 (LDPEYGLYTSVVPPLIYSTMG) form a helical membrane-spanning segment. The Cytoplasmic portion of the chain corresponds to 155–158 (TSRE). Residues 159–179 (LAIGPVAVVSLLLSSMVRDLQ) form a helical membrane-spanning segment. At 180–190 (DPVTDPIAYRK) the chain is on the extracellular side. The chain crosses the membrane as a helical span at residues 191 to 211 (IVFTVTFFAGAFQAIFGLFRL). Residues 212–213 (GF) lie on the Cytoplasmic side of the membrane. The chain crosses the membrane as a helical span at residues 214–234 (LVDFLSHAALVGFMAGAAIVI). Over 235 to 270 (GLQQLKGLFGLTHFTNKTDVVSVLSSVFHSLHHPWQ) the chain is Extracellular. Asn250 carries N-linked (GlcNAc...) asparagine glycosylation. A helical membrane pass occupies residues 271–291 (PLNFVIGSSFLIFILLARFIG). The Cytoplasmic segment spans residues 292–296 (KRNNK). A helical membrane pass occupies residues 297–317 (LFWIPAMAPLISVVLATLIVY). Residues 318 to 352 (LSNAESRGVKIVKHIKPGFNQLSVNQLQFKSPHLG) lie on the Extracellular side of the membrane. A helical membrane pass occupies residues 353–373 (QIAKIGLISAIIALTEAIAVG). At 374–389 (RSFATIKGYRLDGNKE) the chain is on the cytoplasmic side. Residues 390 to 410 (MMAMGFMNIAGSLSSCYVATG) form a helical membrane-spanning segment. Topologically, residues 411–422 (SFSRTAVNFSAG) are extracellular. An N-linked (GlcNAc...) asparagine glycan is attached at Asn418. The chain crosses the membrane as a helical span at residues 423-443 (CETVVSNIVMAITVMISLEVL). The Cytoplasmic portion of the chain corresponds to 444–446 (TRF). Residues 447–467 (LYFTPTAILASIILSALPGLI) form a helical membrane-spanning segment. Over 468 to 482 (DVSGALHIWKLDKLD) the chain is Extracellular. A helical membrane pass occupies residues 483–503 (FLVLIAAFFGVLFASVEIGLL). At 504 to 677 (LAVGISFARI…RARSTSHELC (174 aa)) the chain is on the cytoplasmic side. The 127-residue stretch at 540–666 (YPMANKTAGL…MTVGEAVDIY (127 aa)) folds into the STAS domain.

This sequence belongs to the SLC26A/SulP transporter (TC 2.A.53) family. As to expression, expressed in the phloem in roots and in the phloem of vascular bundles in leaves.

The protein localises to the membrane. In terms of biological role, low-affinity H(+)/sulfate cotransporter that may be involved in the distribution of sulfate from vascular bundles to the palisade cells of the leaves. Plays a central role in the regulation of sulfate assimilation. The chain is Sulfate transporter 2.2 (SULTR2;2) from Arabidopsis thaliana (Mouse-ear cress).